The primary structure comprises 359 residues: MKKYLALALIAPLLISCSTTKKGDTYNEAWVKDTNGFDILMGQFAHNIENIWGFKEVVIAGPKDYVKYTDQYQTRSHINFDDGTITIETIAGTEPAAHLRRAIIKTLLMGDDPSSVDLYSDVDDITISKEPFLYGQVVDNTGQPIRWEGRASNFADYLLKNRLQSRSNGLRIIYSVTINMVPNHLDKRAHKYLGMVRQASRKYGVDESLILAIMQTESSFNPYAVSRSDALGLMQVVQHTAGKDVFRSQGKSGTPSRSFLFDPASNIDTGTAYLAMLNNVYLGGIDNPTSRRYAVITAYNGGAGSVLRVFSNDKIQAANIINTMTPGDVYQTLTTRHPSAESRRYLYKVNTAQKSYRRR.

A signal peptide spans 1 to 16; the sequence is MKKYLALALIAPLLIS. The N-palmitoyl cysteine moiety is linked to residue Cys-17. Residue Cys-17 is the site of S-diacylglycerol cysteine attachment.

It belongs to the transglycosylase Slt family.

The protein resides in the cell outer membrane. It carries out the reaction Exolytic cleavage of the (1-&gt;4)-beta-glycosidic linkage between N-acetylmuramic acid (MurNAc) and N-acetylglucosamine (GlcNAc) residues in peptidoglycan, from either the reducing or the non-reducing ends of the peptidoglycan chains, with concomitant formation of a 1,6-anhydrobond in the MurNAc residue.. Its function is as follows. Murein-degrading enzyme. May play a role in recycling of muropeptides during cell elongation and/or cell division. This chain is Membrane-bound lytic murein transglycosylase C, found in Escherichia coli O139:H28 (strain E24377A / ETEC).